The chain runs to 202 residues: GPI-anchored hemophore cfmB (202 aa).

The signal sequence occupies residues 1–18 (MHFSRTSLILFAAGLASA). Residues 19 to 108 (QLPNVPGCSL…STTASETATT (90 aa)) enclose the CFEM domain. Disulfide bonds link Cys-26–Cys-67, Cys-30–Cys-62, Cys-40–Cys-48, and Cys-50–Cys-83. Asp-45 lines the heme pocket. The tract at residues 94-171 (PVGAASTTAS…PSSQSTSASA (78 aa)) is disordered. A compositionally biased stretch (low complexity) spans 97–171 (AASTTASETA…PSSQSTSASA (75 aa)). Asn-180 is lipidated: GPI-anchor amidated asparagine. The propeptide at 181–202 (AGSEKANVAGVVAVAAAALYLL) is removed in mature form.

Belongs to the RBT5 family. In terms of processing, the GPI-anchor is attached to the protein in the endoplasmic reticulum and serves to target the protein to the cell surface. There, the glucosamine-inositol phospholipid moiety is cleaved off and the GPI-modified mannoprotein is covalently attached via its lipidless GPI glycan remnant to the 1,6-beta-glucan of the outer cell wall layer.

Its subcellular location is the secreted. It localises to the cell wall. The protein localises to the cell membrane. GPI-anchored cell wall protein involved in stabilizing the cell wall. Not implicated in virulence, heme uptake and biofilm formation. This Aspergillus fumigatus (strain ATCC MYA-4609 / CBS 101355 / FGSC A1100 / Af293) (Neosartorya fumigata) protein is GPI-anchored hemophore cfmB.